Consider the following 174-residue polypeptide: Ribosome maturation factor RimM (174 aa).

A PRC barrel domain is found at 98–171 (EDEYYFHEII…TIKIHIMEGL (74 aa)).

Belongs to the RimM family. Binds ribosomal protein uS19.

Its subcellular location is the cytoplasm. Its function is as follows. An accessory protein needed during the final step in the assembly of 30S ribosomal subunit, possibly for assembly of the head region. Essential for efficient processing of 16S rRNA. May be needed both before and after RbfA during the maturation of 16S rRNA. It has affinity for free ribosomal 30S subunits but not for 70S ribosomes. This is Ribosome maturation factor RimM from Bacillus licheniformis (strain ATCC 14580 / DSM 13 / JCM 2505 / CCUG 7422 / NBRC 12200 / NCIMB 9375 / NCTC 10341 / NRRL NRS-1264 / Gibson 46).